The sequence spans 370 residues: Aspartate-semialdehyde dehydrogenase 1 (370 aa).

NADP(+)-binding positions include 9–12 (RGMV), 36–37 (TS), and Q72. R101 serves as a coordination point for phosphate. C134 functions as the Acyl-thioester intermediate in the catalytic mechanism. C134 is subject to S-cysteinyl cysteine; in inhibited form. Q161 provides a ligand contact to substrate. NADP(+) contacts are provided by residues 164–165 (SG) and P192. E240 is a substrate binding site. Position 243 (K243) interacts with phosphate. Residue R267 participates in substrate binding. Catalysis depends on H274, which acts as the Proton acceptor. Q350 provides a ligand contact to NADP(+).

Belongs to the aspartate-semialdehyde dehydrogenase family. In terms of assembly, homodimer.

The catalysed reaction is L-aspartate 4-semialdehyde + phosphate + NADP(+) = 4-phospho-L-aspartate + NADPH + H(+). It functions in the pathway amino-acid biosynthesis; L-lysine biosynthesis via DAP pathway; (S)-tetrahydrodipicolinate from L-aspartate: step 2/4. It participates in amino-acid biosynthesis; L-methionine biosynthesis via de novo pathway; L-homoserine from L-aspartate: step 2/3. Its pathway is amino-acid biosynthesis; L-threonine biosynthesis; L-threonine from L-aspartate: step 2/5. Inhibited by S-methyl-L-cysteine sulfoxide in vitro, via the formation of a covalently bound cysteine at the active site Cys-134. Catalyzes the NADPH-dependent formation of L-aspartate-semialdehyde (L-ASA) by the reductive dephosphorylation of L-aspartyl-4-phosphate. In Vibrio cholerae serotype O1 (strain ATCC 39315 / El Tor Inaba N16961), this protein is Aspartate-semialdehyde dehydrogenase 1 (asd1).